Consider the following 296-residue polypeptide: Phosphatidylserine decarboxylase proenzyme (296 aa).

Catalysis depends on charge relay system; for autoendoproteolytic cleavage activity residues D113, H169, and S256. The active-site Schiff-base intermediate with substrate; via pyruvic acid; for decarboxylase activity is the S256. Residue S256 is modified to Pyruvic acid (Ser); by autocatalysis.

The protein belongs to the phosphatidylserine decarboxylase family. PSD-B subfamily. Prokaryotic type II sub-subfamily. In terms of assembly, heterodimer of a large membrane-associated beta subunit and a small pyruvoyl-containing alpha subunit. Pyruvate serves as cofactor. Post-translationally, is synthesized initially as an inactive proenzyme. Formation of the active enzyme involves a self-maturation process in which the active site pyruvoyl group is generated from an internal serine residue via an autocatalytic post-translational modification. Two non-identical subunits are generated from the proenzyme in this reaction, and the pyruvate is formed at the N-terminus of the alpha chain, which is derived from the carboxyl end of the proenzyme. The autoendoproteolytic cleavage occurs by a canonical serine protease mechanism, in which the side chain hydroxyl group of the serine supplies its oxygen atom to form the C-terminus of the beta chain, while the remainder of the serine residue undergoes an oxidative deamination to produce ammonia and the pyruvoyl prosthetic group on the alpha chain. During this reaction, the Ser that is part of the protease active site of the proenzyme becomes the pyruvoyl prosthetic group, which constitutes an essential element of the active site of the mature decarboxylase.

The protein resides in the cell membrane. The enzyme catalyses a 1,2-diacyl-sn-glycero-3-phospho-L-serine + H(+) = a 1,2-diacyl-sn-glycero-3-phosphoethanolamine + CO2. Its pathway is phospholipid metabolism; phosphatidylethanolamine biosynthesis; phosphatidylethanolamine from CDP-diacylglycerol: step 2/2. Catalyzes the formation of phosphatidylethanolamine (PtdEtn) from phosphatidylserine (PtdSer). The sequence is that of Phosphatidylserine decarboxylase proenzyme from Clostridium botulinum (strain Eklund 17B / Type B).